The primary structure comprises 803 residues: Integrin beta-1 (803 aa).

Residues 1–24 form the signal peptide; it reads MAETNLTLLTWAGILCCLIWSGSA. The residue at position 25 (Gln25) is a Blocked amino end (Gln). Over 25-733 the chain is Extracellular; it reads QQGGSDCIKA…ETPECPSGPD (709 aa). Positions 30 to 80 constitute a PSI domain; sequence DCIKANAKSCGECIQAGPNCGWCKKTDFLQEGEPTSARCDDLAALKSKGCP. 22 cysteine pairs are disulfide-bonded: Cys31-Cys49, Cys39-Cys469, Cys42-Cys68, Cys52-Cys79, Cys211-Cys217, Cys265-Cys305, Cys405-Cys419, Cys439-Cys467, Cys471-Cys491, Cys482-Cys494, Cys496-Cys505, Cys507-Cys538, Cys521-Cys536, Cys530-Cys541, Cys543-Cys558, Cys560-Cys581, Cys565-Cys579, Cys573-Cys584, Cys586-Cys595, Cys597-Cys620, Cys604-Cys618, and Cys612-Cys623. The VWFA domain maps to 144–382; the sequence is DYPIDLYYLM…QLIIDAYNSL (239 aa). Mg(2+) is bound by residues Ser156 and Ser158. Ca(2+) is bound by residues Ser158, Asp161, Asp162, and Glu193. Residues 211-217 are CX3CL1-binding; that stretch reads CTGDQNC. Residue Asn216 is glycosylated (N-linked (GlcNAc...) asparagine). Asn248, Asp250, Pro252, and Glu253 together coordinate Ca(2+). Position 253 (Glu253) interacts with Mg(2+). Asn273 is a glycosylation site (N-linked (GlcNAc...) asparagine). Positions 299–318 are CX3CL1-binding; it reads LPNDGKCHLENNMYTMSHYY. N-linked (GlcNAc...) asparagine glycans are attached at residues Asn367, Asn410, Asn421, Asn433, Asn445, and Asn486. The interaction with TMEM182 stretch occupies residues 387-470; sequence ILENSKLPKE…IHLQFICDCL (84 aa). I-EGF domains follow at residues 471–506, 507–559, 560–596, and 597–636; these read CQSE…RLCE, CSTD…KYCE, CDNF…SACD, and CSLD…PTCE. An N-linked (GlcNAc...) asparagine glycan is attached at Asn525. N-linked (GlcNAc...) asparagine glycosylation occurs at Asn589. N-linked (GlcNAc...) asparagine glycosylation is present at Asn624. 6 cysteine pairs are disulfide-bonded: Cys625-Cys635, Cys638-Cys641, Cys645-Cys696, Cys651-Cys670, Cys654-Cys666, and Cys704-Cys728. A glycan (N-linked (GlcNAc...) asparagine) is linked at Asn674. Residues 734–756 form a helical membrane-spanning segment; that stretch reads IIPIVAGVVAGIVLIGLALLLIW. Residues 757-803 are Cytoplasmic-facing; it reads KLLMIIHDRREFAKFEKEKMNAKWDTGENPIYKSAVTTVVNPKYEGK. Tyr788 carries the post-translational modification Phosphotyrosine; by Tyr-kinases.

It belongs to the integrin beta chain family. As to quaternary structure, heterodimer of an alpha and a beta subunit. Beta-1 associates with either alpha-1, alpha-2, alpha-3, alpha-4, alpha-5, alpha-6, alpha-7, alpha-8, alpha-9, alpha-10, alpha-11 or alpha-V. Interacts with TMEM182 and LAMB1. As to expression, expressed on surface of embryonic fibroblasts (at protein level).

Its subcellular location is the cell membrane. The protein resides in the cell projection. It is found in the invadopodium membrane. It localises to the ruffle membrane. The protein localises to the melanosome. Its subcellular location is the lamellipodium. The protein resides in the ruffle. It is found in the cell junction. It localises to the focal adhesion. Its function is as follows. Integrins alpha-1/beta-1, alpha-2/beta-1, alpha-10/beta-1 and alpha-11/beta-1 are receptors for collagen. Integrins alpha-1/beta-1 and alpha-2/beta-1 recognize the proline-hydroxylated sequence G-F-P-G-E-R in collagen. Integrins alpha-2/beta-1, alpha-3/beta-1, alpha-4/beta-1, alpha-5/beta-1, alpha-8/beta-1, alpha-10/beta-1, alpha-11/beta-1 and alpha-V/beta-1 are receptors for fibronectin. Alpha-4/beta-1 recognizes one or more domains within the alternatively spliced CS-1 and CS-5 regions of fibronectin. Integrin alpha-5/beta-1 is a receptor for fibrinogen. Integrin alpha-1/beta-1, alpha-2/beta-1, alpha-6/beta-1 and alpha-7/beta-1 are receptors for lamimin. Integrin alpha-6/beta-1 (ITGA6:ITGB1) is present in oocytes and is involved in sperm-egg fusion. Integrin alpha-4/beta-1 is a receptor for VCAM1 and recognizes the sequence Q-I-D-S in VCAM1. Integrin alpha-9/beta-1 is a receptor for VCAM1, cytotactin and osteopontin. It recognizes the sequence A-E-I-D-G-I-E-L in cytotactin. Integrin alpha-3/beta-1 is a receptor for epiligrin, thrombospondin and CSPG4. Integrin alpha-3/beta-1 provides a docking site for FAP (seprase) at invadopodia plasma membranes in a collagen-dependent manner and hence may participate in the adhesion, formation of invadopodia and matrix degradation processes, promoting cell invasion. Alpha-3/beta-1 may mediate with LGALS3 the stimulation by CSPG4 of endothelial cells migration. Integrin alpha-V/beta-1 is a receptor for vitronectin. Beta-1 integrins recognize the sequence R-G-D in a wide array of ligands. When associated with alpha-7/beta-1 integrin, regulates cell adhesion and laminin matrix deposition. Involved in promoting endothelial cell motility and angiogenesis. Involved in osteoblast compaction through the fibronectin fibrillogenesis cell-mediated matrix assembly process and the formation of mineralized bone nodules. May be involved in up-regulation of the activity of kinases such as PKC via binding to KRT1. Together with KRT1 and RACK1, serves as a platform for SRC activation or inactivation. ITGA4:ITGB1 binds to fractalkine (CX3CL1) and may act as its coreceptor in CX3CR1-dependent fractalkine signaling. ITGA4:ITGB1 and ITGA5:ITGB1 bind to PLA2G2A via a site (site 2) which is distinct from the classical ligand-binding site (site 1) and this induces integrin conformational changes and enhanced ligand binding to site 1. ITGA5:ITGB1 acts as a receptor for fibrillin-1 (FBN1) and mediates R-G-D-dependent cell adhesion to FBN1. ITGA5:ITGB1 acts as a receptor for fibronectin FN1 and mediates R-G-D-dependent cell adhesion to FN1. ITGA5:ITGB1 is a receptor for IL1B and binding is essential for IL1B signaling. ITGA5:ITGB3 is a receptor for soluble CD40LG and is required for CD40/CD40LG signaling. Plays an important role in myoblast differentiation and fusion during skeletal myogenesis. The sequence is that of Integrin beta-1 (ITGB1) from Gallus gallus (Chicken).